The primary structure comprises 121 residues: Cell division protein FtsB (121 aa).

At 1–6 the chain is on the cytoplasmic side; the sequence is MRNWRW. The chain crosses the membrane as a helical span at residues 7 to 24; the sequence is LLLVLAVLLAWLQYRFWF. Topologically, residues 25–121 are periplasmic; it reads GPGNSGEVMM…PEPVDPVDHP (97 aa). Positions 31–66 form a coiled coil; that stretch reads EVMMLEAQVAHQTQDNEGLRQRNQALAAEVKDLKDG. The disordered stretch occupies residues 98-121; that stretch reads APASAEASAPAQQAPEPVDPVDHP. Over residues 99 to 113 the composition is skewed to low complexity; sequence PASAEASAPAQQAPE.

This sequence belongs to the FtsB family. Part of a complex composed of FtsB, FtsL and FtsQ.

The protein localises to the cell inner membrane. In terms of biological role, essential cell division protein. May link together the upstream cell division proteins, which are predominantly cytoplasmic, with the downstream cell division proteins, which are predominantly periplasmic. This is Cell division protein FtsB from Xanthomonas axonopodis pv. citri (strain 306).